A 241-amino-acid polypeptide reads, in one-letter code: 1-(5-phosphoribosyl)-5-[(5-phosphoribosylamino)methylideneamino] imidazole-4-carboxamide isomerase (241 aa).

The active-site Proton acceptor is the aspartate 10. Aspartate 131 serves as the catalytic Proton donor.

It belongs to the HisA/HisF family.

It is found in the cytoplasm. The catalysed reaction is 1-(5-phospho-beta-D-ribosyl)-5-[(5-phospho-beta-D-ribosylamino)methylideneamino]imidazole-4-carboxamide = 5-[(5-phospho-1-deoxy-D-ribulos-1-ylimino)methylamino]-1-(5-phospho-beta-D-ribosyl)imidazole-4-carboxamide. The protein operates within amino-acid biosynthesis; L-histidine biosynthesis; L-histidine from 5-phospho-alpha-D-ribose 1-diphosphate: step 4/9. The sequence is that of 1-(5-phosphoribosyl)-5-[(5-phosphoribosylamino)methylideneamino] imidazole-4-carboxamide isomerase from Bifidobacterium longum (strain NCC 2705).